Reading from the N-terminus, the 175-residue chain is Large ribosomal subunit protein uL10 (175 aa).

Belongs to the universal ribosomal protein uL10 family. In terms of assembly, part of the ribosomal stalk of the 50S ribosomal subunit. The N-terminus interacts with L11 and the large rRNA to form the base of the stalk. The C-terminus forms an elongated spine to which L12 dimers bind in a sequential fashion forming a multimeric L10(L12)X complex.

In terms of biological role, forms part of the ribosomal stalk, playing a central role in the interaction of the ribosome with GTP-bound translation factors. This is Large ribosomal subunit protein uL10 from Synechococcus sp. (strain WH7803).